Here is a 226-residue protein sequence, read N- to C-terminus: MSQRTAIALLSGGLDSATAAALALEQGDRVIGLSFDYGQRHLRELDAAAAVAQQLGLAEHHCISVNLASWGGSALTDASISIPTDGVEEGRIPPTYVPGRNTVFISVGLSLAEARGAERLVLGVNAVDYSGYPDCRPDYLNAFQTLADLASKAGREGHGAQLWAPLVQWSKVRIVEEALRLGVPIETTWSCYSGGTHPCGVCDSCRIRDAALREAGRPDLCSSTAA.

Leucine 10 to alanine 20 serves as a coordination point for ATP. Zn(2+)-binding residues include cysteine 191, cysteine 199, cysteine 202, and cysteine 205.

It belongs to the QueC family. It depends on Zn(2+) as a cofactor.

The catalysed reaction is 7-carboxy-7-deazaguanine + NH4(+) + ATP = 7-cyano-7-deazaguanine + ADP + phosphate + H2O + H(+). Its pathway is purine metabolism; 7-cyano-7-deazaguanine biosynthesis. Its function is as follows. Catalyzes the ATP-dependent conversion of 7-carboxy-7-deazaguanine (CDG) to 7-cyano-7-deazaguanine (preQ(0)). The sequence is that of 7-cyano-7-deazaguanine synthase from Synechococcus sp. (strain CC9605).